The sequence spans 163 residues: Large ribosomal subunit protein uL10 (163 aa).

The protein belongs to the universal ribosomal protein uL10 family. In terms of assembly, part of the ribosomal stalk of the 50S ribosomal subunit. The N-terminus interacts with L11 and the large rRNA to form the base of the stalk. The C-terminus forms an elongated spine to which L12 dimers bind in a sequential fashion forming a multimeric L10(L12)X complex.

In terms of biological role, forms part of the ribosomal stalk, playing a central role in the interaction of the ribosome with GTP-bound translation factors. In Blochmanniella pennsylvanica (strain BPEN), this protein is Large ribosomal subunit protein uL10.